The following is a 529-amino-acid chain: Peptide chain release factor 3 (529 aa).

The region spanning 11–280 (AKRRTFAIIS…GLVEWAPAPM (270 aa)) is the tr-type G domain. GTP is bound by residues 20–27 (SHPDAGKT), 88–92 (DTPGH), and 142–145 (NKLD).

Belongs to the TRAFAC class translation factor GTPase superfamily. Classic translation factor GTPase family. PrfC subfamily.

It is found in the cytoplasm. In terms of biological role, increases the formation of ribosomal termination complexes and stimulates activities of RF-1 and RF-2. It binds guanine nucleotides and has strong preference for UGA stop codons. It may interact directly with the ribosome. The stimulation of RF-1 and RF-2 is significantly reduced by GTP and GDP, but not by GMP. The protein is Peptide chain release factor 3 of Yersinia pseudotuberculosis serotype O:1b (strain IP 31758).